Reading from the N-terminus, the 356-residue chain is Septin-12 (356 aa).

A disordered region spans residues 1-23 (MDERRTPSPCSSRPSSPRTPPCE). Positions 7–16 (PSPCSSRPSS) are enriched in low complexity. One can recognise a Septin-type G domain in the interval 44-315 (TGFEFNIMVV…ENYRVLRLNE (272 aa)). The interval 44–317 (TGFEFNIMVV…YRVLRLNESH (274 aa)) is interaction with SEPTIN7. Residues 54-61 (GQSGLGKS) are G1 motif. GTP contacts are provided by residues 54 to 61 (GQSGLGKS), Thr-87, Gly-113, 193 to 201 (RADSLTIEE), Gly-249, and Arg-264. The segment at 110–113 (DTPG) is G3 motif. Residues 192-195 (ARAD) are G4 motif. The interval 256–356 (VNGRCVLGRK…RSKDPRDDEC (101 aa)) is self-association (via N-terminus) to polymerize octameric septin 12-7-6-2/4-2/4-6-7-12 filaments. Residues 330–356 (PASPGQLMAPGPEKVRKRSKDPRDDEC) are disordered.

This sequence belongs to the TRAFAC class TrmE-Era-EngA-EngB-Septin-like GTPase superfamily. Septin GTPase family. Septins polymerize into heterooligomeric protein complexes that form filaments, and can associate with cellular membranes, actin filaments and microtubules. GTPase activity is required for filament formation. Interacts with SEPTIN6 and SEPTIN11. Self-associates. Component of a octameric complex consisting of SEPTIN12, SEPTIN7, SEPTIN6 and SEPTIN2 or SEPTIN4 in the order 12-7-6-2-2-6-7-12 or 12-7-6-4-4-6-7-12 and located in the sperm annulus; the octamer polymerizes into filaments via the SEPTIN12 N- and C-termini; the SEPTIN12:SEPTIN7 association is mediated by the GTP-binding domains. Interacts with SPAG4 and LMNB1. Associates with alpha- and beta-tubulins. In terms of tissue distribution, predominantly expressed in testis and epididymis. Component of the sperm tail annulus (at protein level).

Its subcellular location is the cytoplasm. It localises to the cytoskeleton. The protein localises to the spindle. The protein resides in the cell projection. It is found in the cilium. Its subcellular location is the flagellum. Functionally, filament-forming cytoskeletal GTPase. May play a role in cytokinesis (Potential). Involved in spermatogenesis. Involved in the morphogenesis of sperm heads and the elongation of sperm tails probably implicating the association with alpha- and beta-tubulins. Forms a filamentous structure with SEPTIN7, SEPTIN6, SEPTIN2 and probably SEPTIN4 at the sperm annulus which is required for the structural integrity and motility of the sperm tail during postmeiotic differentiation. The chain is Septin-12 from Rattus norvegicus (Rat).